We begin with the raw amino-acid sequence, 430 residues long: Enolase (430 aa).

A (2R)-2-phosphoglycerate-binding site is contributed by glutamine 164. The active-site Proton donor is the glutamate 206. The Mg(2+) site is built by aspartate 243, glutamate 288, and aspartate 315. The (2R)-2-phosphoglycerate site is built by lysine 340, arginine 369, serine 370, and lysine 391. The Proton acceptor role is filled by lysine 340.

Belongs to the enolase family. Mg(2+) serves as cofactor.

The protein localises to the cytoplasm. It localises to the secreted. The protein resides in the cell surface. It catalyses the reaction (2R)-2-phosphoglycerate = phosphoenolpyruvate + H2O. It functions in the pathway carbohydrate degradation; glycolysis; pyruvate from D-glyceraldehyde 3-phosphate: step 4/5. Functionally, catalyzes the reversible conversion of 2-phosphoglycerate (2-PG) into phosphoenolpyruvate (PEP). It is essential for the degradation of carbohydrates via glycolysis. This is Enolase from Lysinibacillus sphaericus (strain C3-41).